A 308-amino-acid polypeptide reads, in one-letter code: V-type immunoglobulin domain-containing suppressor of T-cell activation (308 aa).

Positions 1–32 (MGVPAVPEASSPRWGTLLLAIFLAASRGLVAA) are cleaved as a signal peptide. The Ig-like V-type domain occupies 33-167 (FKVTTPYSLY…RFYGSMELQV (135 aa)). Residues 33 to 191 (FKVTTPYSLY…EQDSDSITAA (159 aa)) lie on the Extracellular side of the membrane. 3 N-linked (GlcNAc...) asparagine glycosylation sites follow: asparagine 49, asparagine 91, and asparagine 127. A disulfide bridge connects residues cysteine 54 and cysteine 145. A helical transmembrane segment spans residues 192-212 (ALATGACIVGILCLPLILLLV). Residues 213-308 (YKQRQVASHR…VPDSPNSEAI (96 aa)) are Cytoplasmic-facing. The segment at 230 to 308 (MDSNTQGIEN…VPDSPNSEAI (79 aa)) is disordered. The residue at position 232 (serine 232) is a Phosphoserine.

At the cell surface, may be cleaved by MMP14. Post-translationally, N-glycosylated. In terms of tissue distribution, expressed in spleen, thymus, bone marrow, lymph node, and in T-cells within the lamina propria of the small intestine. Detected on CD4+ and CD8+ T-cells, bone marrow-derived dendritic cells (BMDCs), peritoneal macrophages, neutrophils, and natural killer (NK) cells. In spleen and lymph nodes, highly expressed on CD4+ T-cell populations, and at lower levels on CD8+ T-cells. In thymus, has low expression on CD4+ cells and CD8+ cells, and not detected on CD4+CD8+ cells. Expressed in splenic and peritoneal CD11b cells. Not detected in most B cells and NK cells (at protein level). Also detected at lower levels in non-hematopoeitic tissues such as heart, brain, lung, kidney, muscle, ovary, and testis.

It is found in the cell membrane. Immunoregulatory receptor which inhibits the T-cell response. May promote differentiation of embryonic stem cells, by inhibiting BMP4 signaling. May stimulate MMP14-mediated MMP2 activation. This Mus musculus (Mouse) protein is V-type immunoglobulin domain-containing suppressor of T-cell activation.